Reading from the N-terminus, the 530-residue chain is MSVEALGNTGMEPPFTKRNPALRLVDLAGAHHPHHHHHPPHLPQSVTGYPGYVAHSHSMAHVHPGEFAADSRLGPSAAFRTEHIGHPGALKLSPAHNPHHRHHHHHHHHHHMAGHAEVASSQTGAFGPAQSPAGSYSSLPHPAQAICAAGRDWLIGRDVTVPVMPGLTEQHSPSHHGMFLSTTGSYHGHHTEAGSHPYFSGAPEQASHATPGGQPLNGHIRLGLPGDMYTRSDHFSQPVTRTDHFASPSLHNYCGMNLNMNITPHHHGPGAFFRYMRQAIKQELICKWIEEDQLPKKLCSKTFSTMHELVTHVTVEHVGGPEQSNHICFWEECPREGKPFKAKYKLVNHIRVHTGEKPFPCPFPGCGKVFARSENLKIHKRTHTGEKPFKCEFEGCDRRFANSSDRKKHSHVHTSDKPYNCKVRGCDKSYTHPSSLRKHMKVHCKSPPPSSGYESSIPSLVSPSSDSGQDPGATSSQPEPPTSSQGANLSEWYVCQQGSAASGIPTPPGNTPSPEHRKPSYSNWQATNTF.

Composition is skewed to basic residues over residues His-31–Pro-40 and Asn-97–Ala-113. Disordered regions lie at residues His-31–Pro-50 and Pro-87–Ser-138. The C2H2-type 1; atypical zinc-finger motif lies at Leu-284–His-317. Residues His-326–His-353 form a C2H2-type 2; atypical zinc finger. 3 C2H2-type zinc fingers span residues Phe-359–His-383, Phe-389–His-413, and Tyr-419–His-443. The tract at residues His-432 to Phe-530 is disordered. The segment covering Ser-435–Cys-444 has biased composition (basic residues). 2 stretches are compositionally biased toward low complexity: residues Ser-455–Ser-467 and Thr-474–Gln-485. A compositionally biased stretch (polar residues) spans Ser-520 to Phe-530.

It belongs to the GLI C2H2-type zinc-finger protein family. As to expression, at mid-gastrula stage (stage 11.5), weakly expressed in the prospective neural fold. Expressed in the neural plate border region at early neurula stage (stage 15) with strongest expression in the prospective regions of the hyoid and branchial crests. Expression in the dorsal central nervous system (CNS) continues through late neurula stage and early tail bud stages with expression strongest in the olfactory placode and expression levels increasing as development progresses. Becomes expressed in somites.

The protein resides in the nucleus. In terms of biological role, may bind to DNA. Induces neural and neural crest differentiation. Does not induce anterior neural tissue. The sequence is that of Zinc finger protein ZIC 4 (zic4) from Xenopus laevis (African clawed frog).